A 122-amino-acid polypeptide reads, in one-letter code: Large ribosomal subunit protein uL14 (122 aa).

This sequence belongs to the universal ribosomal protein uL14 family. In terms of assembly, part of the 50S ribosomal subunit. Forms a cluster with proteins L3 and L19. In the 70S ribosome, L14 and L19 interact and together make contacts with the 16S rRNA in bridges B5 and B8.

Binds to 23S rRNA. Forms part of two intersubunit bridges in the 70S ribosome. This chain is Large ribosomal subunit protein uL14, found in Dehalococcoides mccartyi (strain ATCC BAA-2100 / JCM 16839 / KCTC 5957 / BAV1).